The primary structure comprises 282 residues: tRNA uridine(34) hydroxylase (282 aa).

The region spanning D128–Y222 is the Rhodanese domain. Residue C182 is the Cysteine persulfide intermediate of the active site.

It belongs to the TrhO family.

The enzyme catalyses uridine(34) in tRNA + AH2 + O2 = 5-hydroxyuridine(34) in tRNA + A + H2O. Its function is as follows. Catalyzes oxygen-dependent 5-hydroxyuridine (ho5U) modification at position 34 in tRNAs. This Cupriavidus metallidurans (strain ATCC 43123 / DSM 2839 / NBRC 102507 / CH34) (Ralstonia metallidurans) protein is tRNA uridine(34) hydroxylase.